We begin with the raw amino-acid sequence, 124 residues long: Small ribosomal subunit protein bS6 (124 aa).

The interval 96–124 (ETGPSPMMKEVQREEAKKAAAAQPAEAQA) is disordered. Positions 114–124 (AAAAQPAEAQA) are enriched in low complexity.

This sequence belongs to the bacterial ribosomal protein bS6 family.

Binds together with bS18 to 16S ribosomal RNA. The sequence is that of Small ribosomal subunit protein bS6 from Burkholderia orbicola (strain MC0-3).